The following is a 611-amino-acid chain: Sensor histidine kinase WalK (611 aa).

Residues 1–13 lie on the Cytoplasmic side of the membrane; sequence MNKVGFFRSIQFK. The chain crosses the membrane as a helical span at residues 14–34; the sequence is ITLIYVLLIIIAMQIIGVYFV. At 35–182 the chain is on the extracellular side; the sequence is NQVEKSLISS…VFNQMKTINT (148 aa). The helical transmembrane segment at 183-203 threads the bilayer; that stretch reads ILASGTGLALVLTALLGIFLA. The region spanning 204 to 256 is the HAMP domain; that stretch reads RTITHPLSDMRKQAMELAKGNFSRKVKKYGHDEIGQLATTFNHLTRELEDAQA. Residues 204-611 are Cytoplasmic-facing; the sequence is RTITHPLSDM…EEQEDDWDEA (408 aa). One can recognise a PAS domain in the interval 263 to 324; it reads RKLASVIAYM…QENYTFEDLV (62 aa). The PAC domain occupies 325-379; that stretch reads EQQDSMLLEIERDDELTVLRVNFSVIQREHGKIDGLIAVIYDVTEQEKMDQERRE. The Histidine kinase domain maps to 383 to 602; that stretch reads NVSHELRTPL…TITFTLPYKE (220 aa). A Phosphohistidine; by autocatalysis modification is found at H386.

As to quaternary structure, homodimer. Interacts with YycH and YycI. Autophosphorylated.

The protein resides in the cell membrane. The catalysed reaction is ATP + protein L-histidine = ADP + protein N-phospho-L-histidine.. In terms of biological role, member of the two-component regulatory system WalK/WalR involved in the regulation of the ftsAZ operon, the yocH and ykvT, cwlO, lytE, ydjM, yjeA, yoeB genes and the tagAB and tagDEF operons. Phosphorylates WalR. This Bacillus subtilis (strain 168) protein is Sensor histidine kinase WalK.